The sequence spans 360 residues: Replication-associated protein (360 aa).

The region spanning 11 to 114 is the CRESS-DNA virus Rep endonuclease domain; sequence SHRNANTFLT…PLAVFERGTF (104 aa). Positions 18 to 21 match the RCR-1 motif; it reads FLTY. A divalent metal cation is bound by residues glutamate 52, histidine 60, and histidine 62. Positions 60–62 match the RCR-2 motif; it reads HLH. The active-site For DNA cleavage activity is tyrosine 100. The RCR-3 motif lies at 100 to 103; sequence YILK. Glutamate 104 is a binding site for a divalent metal cation. The segment at 175–187 is oligomerization; that stretch reads SANKLFPEIQEEF. 229-236 contacts ATP; it reads GPTRTGKS. A transactivation region spans residues 252 to 270; it reads VDWSSYNEDAIYNIVDDIP. The Nuclear localization signal motif lies at 292–303; it reads KYGKKKKVQKKS.

It belongs to the geminiviridae Rep protein family. Homooligomer. Rep binds to repeated DNA motifs (iterons). Forms the O-complex, which is a Rep-DNA complex involved in the initiation of RCR. Part of the C- and V-complexes which are RepA-Rep-DNA complexes involved in the c-sense and v-sense transcription. The cofactor is Mg(2+). Mn(2+) serves as cofactor.

It is found in the host nucleus. Its function is as follows. Essential for the replication of viral ssDNA. The closed circular ssDNA genome is first converted to a superhelical dsDNA. Rep binds a specific region at the genome origin of replication. It introduces an endonucleolytic nick within the conserved sequence 5'-TAATATTAC-3' in the intergenic region of the genome present in all geminiviruses, thereby initiating the rolling circle replication (RCR). Following cleavage, binds covalently to the 5'-phosphate of DNA as a tyrosyl ester. The cleavage gives rise to a free 3'-OH that serves as a primer for the cellular DNA polymerase. The polymerase synthesizes the (+) strand DNA by rolling circle mechanism. After one round of replication, a Rep-catalyzed nucleotidyl transfer reaction releases a circular single-stranded virus genome, thereby terminating the replication. Displays origin-specific DNA cleavage, nucleotidyl transferase, ATPase and helicase activities. Acts as an inhibitor of C-sense gene transcription. This is Replication-associated protein from Maize streak virus genotype A (isolate Nigeria) (MSV).